The primary structure comprises 386 residues: Dual-specificity RNA methyltransferase RlmN (386 aa).

Residue Glu-94 is the Proton acceptor of the active site. Positions 100–341 (EENRGTLCIS…VTTIRKTRGD (242 aa)) constitute a Radical SAM core domain. The cysteines at positions 107 and 347 are disulfide-linked. [4Fe-4S] cluster-binding residues include Cys-114, Cys-118, and Cys-121. Residues 173 to 174 (GE), Ser-205, 227 to 229 (SLH), and Asn-304 each bind S-adenosyl-L-methionine. Cys-347 (S-methylcysteine intermediate) is an active-site residue.

Belongs to the radical SAM superfamily. RlmN family. Requires [4Fe-4S] cluster as cofactor.

It localises to the cytoplasm. The enzyme catalyses adenosine(2503) in 23S rRNA + 2 reduced [2Fe-2S]-[ferredoxin] + 2 S-adenosyl-L-methionine = 2-methyladenosine(2503) in 23S rRNA + 5'-deoxyadenosine + L-methionine + 2 oxidized [2Fe-2S]-[ferredoxin] + S-adenosyl-L-homocysteine. The catalysed reaction is adenosine(37) in tRNA + 2 reduced [2Fe-2S]-[ferredoxin] + 2 S-adenosyl-L-methionine = 2-methyladenosine(37) in tRNA + 5'-deoxyadenosine + L-methionine + 2 oxidized [2Fe-2S]-[ferredoxin] + S-adenosyl-L-homocysteine. Specifically methylates position 2 of adenine 2503 in 23S rRNA and position 2 of adenine 37 in tRNAs. m2A2503 modification seems to play a crucial role in the proofreading step occurring at the peptidyl transferase center and thus would serve to optimize ribosomal fidelity. This is Dual-specificity RNA methyltransferase RlmN from Herminiimonas arsenicoxydans.